Reading from the N-terminus, the 100-residue chain is Urease subunit gamma (100 aa).

The protein belongs to the urease gamma subunit family. In terms of assembly, heterotrimer of UreA (gamma), UreB (beta) and UreC (alpha) subunits. Three heterotrimers associate to form the active enzyme.

Its subcellular location is the cytoplasm. The catalysed reaction is urea + 2 H2O + H(+) = hydrogencarbonate + 2 NH4(+). Its pathway is nitrogen metabolism; urea degradation; CO(2) and NH(3) from urea (urease route): step 1/1. The chain is Urease subunit gamma from Vibrio parahaemolyticus.